Here is a 3966-residue protein sequence, read N- to C-terminus: Histone-lysine N-methyltransferase 2A (3966 aa).

Disordered stretches follow at residues 1–106 (MAHS…LLRV) and 130–231 (VFGE…GVKI). Positions 6 to 25 (RWRFPARPGTTGGGGGGGRR) match the Menin-binding motif (MBM) motif. Residues 15-29 (TTGGGGGGGRRGLGG) are compositionally biased toward gly residues. A compositionally biased stretch (low complexity) spans 75 to 102 (GAAAASAASSSSASSSSSSSSSASSGPA). Residues 121-132 (GTNLRRFRAVFG) carry the Integrase domain-binding motif 1 (IBM1) motif. Serine 134 and serine 140 each carry phosphoserine; by CK2. An Integrase domain-binding motif 2 (IBM2) motif is present at residues 145-150 (QFLGFG). Serine 151 carries the phosphoserine modification. The a.T hook 1 DNA-binding region spans 167–178 (KASPRKPRGRPR). Residue serine 195 is modified to Phosphoserine. The segment covering 200 to 218 (SETKSADKIKKKDSKSIEK) has biased composition (basic and acidic residues). Positions 215 to 225 (SIEKKRGRPPT) form a DNA-binding region, a.T hook 2. Lysine 237 bears the N6-acetyllysine mark. The a.T hook 3 DNA-binding region spans 299-307 (RRRGRPPST). Residues 322 to 343 (LEKPQKVRKDKEGTPPLTKEDK) are disordered. N6-acetyllysine is present on lysine 371. The interval 440–590 (RLESTPNSRF…PWLMPPTIPL (151 aa)) is disordered. Residues 450-489 (SATSCGSSEKSSAASQHSSQMSSDSSRSSSPSIDTTSDSQ) are compositionally biased toward low complexity. Serine 516 is subject to Phosphoserine. Residues 544–557 (LPTLQSAPQQQTSS) show a composition bias toward low complexity. Positions 558-571 (SPPPPLLTPPPPLQ) are enriched in pro residues. At lysine 634 the chain carries N6-acetyllysine. Residue serine 678 is modified to Phosphoserine. Disordered stretches follow at residues 711 to 943 (ESVT…ADVA), 963 to 1003 (RGNL…TSSI), 1034 to 1064 (IEKS…RGPR), and 1101 to 1161 (ILSS…CQVP). 2 stretches are compositionally biased toward low complexity: residues 717–730 (SNRT…SGVS) and 760–790 (LSTS…ASAL). Composition is skewed to polar residues over residues 791–806 (NPTF…QSGE) and 817–830 (QTSA…SNSP). Residue threonine 837 is modified to Phosphothreonine. A compositionally biased stretch (basic and acidic residues) spans 843–887 (EKGRKKDTAPEELSKDRDADKSVEKDKSRERDREREKENKRESRK). A Phosphoserine modification is found at serine 923. Low complexity predominate over residues 989–1003 (SAPSSSTVKHSTSSI). The segment covering 1040–1059 (LKQTDQPKAQGQESDSSETS) has biased composition (polar residues). Serine 1053 carries the post-translational modification Phosphoserine. A compositionally biased stretch (basic and acidic residues) spans 1101-1111 (ILSSMGNDDKS). The residue at position 1127 (lysine 1127) is an N6-acetyllysine. A CXXC-type zinc finger spans residues 1144–1192 (KKGRRSRRCGQCPGCQVPEDCGICTNCLDKPKFGGRNIKKQCCKMRKCQ). The Zn(2+) site is built by cysteine 1152, cysteine 1155, cysteine 1158, cysteine 1164, cysteine 1167, cysteine 1170, cysteine 1186, and cysteine 1191. Residues 1196-1390 (WMPSKASLQK…PLSNGISSKQ (195 aa)) form a disordered region. The segment covering 1217–1229 (SKTTEKKESKEST) has biased composition (basic and acidic residues). The span at 1230-1241 (AVKSPLEPAQKA) shows a compositional bias: low complexity. Position 1232 is an N6-acetyllysine (lysine 1232). Positions 1245–1270 (PREEPAPKKSSSEPPPRKPVEEKSEE) are enriched in basic and acidic residues. A compositionally biased stretch (polar residues) spans 1369–1390 (KQENAGTLNILNPLSNGISSKQ). 3 PHD-type zinc fingers span residues 1430-1481 (RVVC…CKFC), 1478-1532 (CKFC…CVRC), and 1565-1629 (GNFC…CTER). The interaction with histone H3K4me3 stretch occupies residues 1583–1599 (KMMQCGKCDRWVHSKCE). One can recognise a Bromo domain in the interval 1637–1767 (ALEKELQASL…SFFIRQMERV (131 aa)). Disordered regions lie at residues 1665–1714 (YRQA…EGVK) and 1807–1870 (WQER…PGID). A compositionally biased stretch (pro residues) spans 1828–1849 (APKPKGPGEPDSPTPLHPPTPP). Serine 1839 carries the phosphoserine modification. The residue at position 1847 (threonine 1847) is a Phosphothreonine. Phosphoserine is present on serine 1860. The C2HC pre-PHD-type zinc finger occupies 1872 to 1912 (NRQCALCLMYGDDSANDAGRLLYIGQNEWTHVNCALWSAEV). The PHD-type 4 zinc finger occupies 1933 to 1980 (LRCEFCQKPGATVGCCLTSCTSNYHFMCSRAKNCVFLDDKKVYCQRHR). The region spanning 2020 to 2076 (NIHMMIGSMTIDCLGILNDLSDCEDKLFPIGYQCSRVYWSTTDARKRCVYTCKIMEC) is the FYR N-terminal domain. Serine 2100 is subject to Phosphoserine. The disordered stretch occupies residues 2147–2174 (RTPSYSPTQRSPGCRPLPSAGSPTPTTH). The residue at position 2148 (threonine 2148) is a Phosphothreonine. Phosphoserine is present on residues serine 2152 and serine 2202. Disordered stretches follow at residues 2214–2339 (VRTG…ATPG), 2371–2619 (RGQR…SARA), 2639–2673 (EDIP…SDED), and 2709–2759 (KISQ…DAGE). Positions 2218 to 2230 (SAYSRSSVSSVPS) are enriched in low complexity. Polar residues-rich tracts occupy residues 2250-2284 (LSSS…SSPS) and 2308-2320 (TSSS…SAHS). Composition is skewed to basic and acidic residues over residues 2411 to 2422 (ILHEHIGSSSRD) and 2430 to 2440 (SSKETCKEKHS). Polar residues predominate over residues 2498 to 2509 (GQSTQVEGSSKE). A Glycyl lysine isopeptide (Lys-Gly) (interchain with G-Cter in SUMO2) cross-link involves residue lysine 2524. A compositionally biased stretch (polar residues) spans 2528–2537 (ENQSKNTQKE). Serine 2560 carries the phosphoserine modification. Over residues 2569–2588 (PSPNNTLSQDPQSNNYQNLP) the composition is skewed to polar residues. Serine 2607 bears the Phosphoserine mark. Residues 2609 to 2618 (KRRYPRRSAR) are compositionally biased toward basic residues. Residues 2663 to 2673 (GADDLSTSDED) show a composition bias toward acidic residues. Residues 2722 to 2737 (SDTSVTATSRKSSQIP) are compositionally biased toward polar residues. Basic and acidic residues predominate over residues 2740–2759 (NGKENGTENLKIDRPEDAGE). The residue at position 2792 (serine 2792) is a Phosphoserine. The 9aaTAD signature appears at 2843–2851 (SDIMDFVLK). Serine 2951 carries the post-translational modification Phosphoserine. The residue at position 2954 (lysine 2954) is an N6-acetyllysine. Disordered stretches follow at residues 2958–3060 (ITEK…NAAV) and 3164–3239 (AAQS…PSNI). Over residues 3012–3025 (HGNSQDLTRNSGTP) the composition is skewed to polar residues. A Phosphoserine modification is found at serine 3032. Over residues 3035-3060 (VPVQNQKYVPSSTDSPGPSQISNAAV) the composition is skewed to polar residues. A compositionally biased stretch (low complexity) spans 3167–3178 (SSFPPNISSPPS). The span at 3196–3212 (EANQRTDLTTTVATPSS) shows a compositional bias: polar residues. Positions 3214-3229 (LKKRPISRLHTRKNKK) are enriched in basic residues. Position 3369 is a phosphothreonine (threonine 3369). Lysine 3459 carries the post-translational modification N6-acetyllysine. The interval 3462-3640 (TLTSQRDRDP…AMEEEESGFS (179 aa)) is disordered. A compositionally biased stretch (polar residues) spans 3475–3487 (PGTQPSNFTQTAE). A compositionally biased stretch (low complexity) spans 3501 to 3528 (PSAKPASSASPGSSPSSGQQSGSSSVPG). Residues serine 3510 and serine 3523 each carry the phosphoserine modification. Over residues 3558–3570 (TSSEAHIPHRDTD) the composition is skewed to basic and acidic residues. Residues 3663-3744 (KKGLVFEISS…KHCRNYKFRF (82 aa)) form the FYR C-terminal domain. The WDR5 interaction motif (WIN) signature appears at 3759–3764 (GSARAE). Residues 3782-3805 (HRQPPEYNPNDEEEEEVQLKSARR) are disordered. Positions 3826-3942 (EAVGVYRSPI…RGEELTYDYK (117 aa)) constitute an SET domain. Positions 3836 and 3838 each coordinate S-adenosyl-L-methionine. The residue at position 3879 (cysteine 3879) is an S-methylcysteine; by autocatalysis. Residues tyrosine 3880 and 3903-3904 (NH) contribute to the S-adenosyl-L-methionine site. Zn(2+)-binding residues include cysteine 3906 and cysteine 3954. One can recognise a Post-SET domain in the interval 3950 to 3966 (NKLPCNCGAKKCRKFLN). Asparagine 3955 contributes to the S-adenosyl-L-methionine binding site. 2 residues coordinate Zn(2+): cysteine 3956 and cysteine 3961.

This sequence belongs to the class V-like SAM-binding methyltransferase superfamily. Histone-lysine methyltransferase family. TRX/MLL subfamily. In terms of assembly, MLL cleavage product N320 heterodimerizes with MLL cleavage product C180 (via SET and FYRC domains). Component of some MLL1/MLL complex, at least composed of the core components KMT2A/MLL1, ASH2L, HCFC1/HCF1, HCFC2, WDR5, DPY30 and RBBP5, as well as the facultative components BACC1, CHD8, E2F6, HSP70, INO80C, KANSL1, LAS1L, MAX, MCRS1, MEN1, MGA, KAT8/MOF, PELP1, PHF20, PRP31, RING2, RUVB1/TIP49A, RUVB2/TIP49B, SENP3, TAF1, TAF4, TAF6, TAF7, TAF9 and TEX10. Interacts (via WIN motif) with WDR5; the interaction is direct. Interaction with WDR5 is required for stable interaction with ASH2L and RBBP5, and thereby also for optimal histone methyltransferase activity. Interacts with KAT8/MOF; the interaction is direct. Interacts with SBF1 and PPP1R15A. Interacts with ZNF335. Interacts with CLOCK and BMAL1 in a circadian manner. Interacts with PPIE; this results in decreased histone H3 methyltransferase activity. Interacts with CREBBP. Interacts with the WRAD complex composed of WDR5, RBBP5, ASH2L and DPY30. Interacts (via MBM motif) with MEN1. Interacts (via IBM motifs) with PSIP1 (via IBD domain) with moderate affinity whereas the KMT2A-MEN1 complex interacts with a greater affinity; MEN1 enhances interaction of KMT2A with PSIP1. Phosphorylation increases its affinity for PSIP1. Forms a complex with CREBBP and CREB1. Post-translationally, proteolytic cleavage by TASP1 generates MLL cleavage 3product N320 and MLL cleavage product C180, which reassemble through a non-covalent association. 2 cleavage sites exist, cleavage site 1 (CS1) and cleavage site 2 (CS2), to generate MLL cleavage products N320 and C180. CS2 is the major site. In terms of processing, phosphorylation increases its interaction with PSIP1. Auto-methylated at Cys-3879: auto-methylation is inhibited by the WRAD complex and unmodified histone H3.

The protein localises to the nucleus. It catalyses the reaction L-lysyl(4)-[histone H3] + S-adenosyl-L-methionine = N(6)-methyl-L-lysyl(4)-[histone H3] + S-adenosyl-L-homocysteine + H(+). The catalysed reaction is N(6)-methyl-L-lysyl(4)-[histone H3] + S-adenosyl-L-methionine = N(6),N(6)-dimethyl-L-lysyl(4)-[histone H3] + S-adenosyl-L-homocysteine + H(+). The enzyme catalyses L-cysteinyl-[protein] + S-adenosyl-L-methionine = S-methyl-L-cysteinyl-[protein] + S-adenosyl-L-homocysteine + H(+). In terms of biological role, histone methyltransferase that plays an essential role in early development and hematopoiesis. Catalytic subunit of the MLL1/MLL complex, a multiprotein complex that mediates both methylation of 'Lys-4' of histone H3 (H3K4me) complex and acetylation of 'Lys-16' of histone H4 (H4K16ac). Catalyzes methyl group transfer from S-adenosyl-L-methionine to the epsilon-amino group of 'Lys-4' of histone H3 (H3K4) via a non-processive mechanism. Part of chromatin remodeling machinery predominantly forms H3K4me1 and H3K4me2 methylation marks at active chromatin sites where transcription and DNA repair take place. Has weak methyltransferase activity by itself, and requires other component of the MLL1/MLL complex to obtain full methyltransferase activity. Has no activity toward histone H3 phosphorylated on 'Thr-3', less activity toward H3 dimethylated on 'Arg-8' or 'Lys-9', while it has higher activity toward H3 acetylated on 'Lys-9'. Binds to unmethylated CpG elements in the promoter of target genes and helps maintain them in the nonmethylated state. Required for transcriptional activation of HOXA9. Promotes PPP1R15A-induced apoptosis. Plays a critical role in the control of circadian gene expression and is essential for the transcriptional activation mediated by the CLOCK-BMAL1 heterodimer. Establishes a permissive chromatin state for circadian transcription by mediating a rhythmic methylation of 'Lys-4' of histone H3 (H3K4me) and this histone modification directs the circadian acetylation at H3K9 and H3K14 allowing the recruitment of CLOCK-BMAL1 to chromatin. Also has auto-methylation activity on Cys-3879 in absence of histone H3 substrate. This Mus musculus (Mouse) protein is Histone-lysine N-methyltransferase 2A (Kmt2a).